The sequence spans 173 residues: MQFPMGPACIFLRKGIAEKQRERPLGQDEIEELREAFLEFDKDRDGFISCKDLGNLMRTMGYMPTEMELIELGQQIRMNLGGRVDFDDFVELMTPKLLAETAGMIGVQEMRDAFKEFDTNGDGEITLVELQQAMQRLLGERLTPREISEVVREADVNGDGTVDFEEFVKMMSR.

EF-hand domains are found at residues 28-63, 82-99, 105-140, and 142-173; these read DEIEELREAFLEFDKDRDGFISCKDLGNLMRTMGYM, GRVDFDDFVELMTPKLLA, IGVQEMRDAFKEFDTNGDGEITLVELQQAMQRLLGE, and LTPREISEVVREADVNGDGTVDFEEFVKMMSR. The Ca(2+) site is built by aspartate 41, aspartate 43, aspartate 45, and aspartate 52. Residues aspartate 118, asparagine 120, aspartate 122, glutamate 124, glutamate 129, aspartate 155, asparagine 157, aspartate 159, threonine 161, and glutamate 166 each coordinate Ca(2+).

Interacts with CACNA1C (via C-terminal CDB motif) in a calcium-dependent manner. Interacts with STXBP1. Interacts with MYO6. Retina.

It is found in the cytoplasm. Functionally, inhibits calcium-dependent inactivation of L-type calcium channel and shifts voltage dependence of activation to more depolarized membrane potentials. Involved in the transmission of light signals. May positively regulate neurotransmitter vesicle endocytosis and exocytosis in a salt-dependent manner. May play a role in the extension and network organization of neurites. The sequence is that of Calcium-binding protein 5 (CABP5) from Homo sapiens (Human).